We begin with the raw amino-acid sequence, 373 residues long: MNNDRRFGLKRHITLPGELALDGGSLLTGIEIAYETYGHLNADASNAILICHPLTADQFAASDHPITGKPGWWSRMIGKGKPIDPERYCIICSNVLGSCLGSTGPSSFTPGTETPYAMNFPVITIRDMVRAQAKLLDYLGIRQLKAVIGGSMGGMQALEWASTYPDRVKSVVIIASTARHSAQNIAFHEVGRQAIMADPKWRQGNYYEEKDPPVAGLAVARMAAHITYLSESGLTARFGRRLQSRQEKSFGFDADFQIESYLRHQGIRFVERFDANSYLYITRATDYFDLAEEHGGKLANAFRGTKSRFCVISFDSDWLYPTSESRVIVHALNAAGAAVSFMELSNPNGHDSFLLDAPDLHRTVHGFLEGDRA.

Residues 46–355 form the AB hydrolase-1 domain; that stretch reads NAILICHPLT…NPNGHDSFLL (310 aa). Serine 151 acts as the Nucleophile in catalysis. Arginine 221 is a binding site for substrate. Active-site residues include aspartate 317 and histidine 350. Residue aspartate 351 participates in substrate binding.

The protein belongs to the AB hydrolase superfamily. MetX family. As to quaternary structure, homodimer.

It localises to the cytoplasm. The enzyme catalyses L-homoserine + acetyl-CoA = O-acetyl-L-homoserine + CoA. It functions in the pathway amino-acid biosynthesis; L-methionine biosynthesis via de novo pathway; O-acetyl-L-homoserine from L-homoserine: step 1/1. Transfers an acetyl group from acetyl-CoA to L-homoserine, forming acetyl-L-homoserine. This is Homoserine O-acetyltransferase from Zymomonas mobilis subsp. mobilis (strain ATCC 31821 / ZM4 / CP4).